A 171-amino-acid polypeptide reads, in one-letter code: 3-hydroxydecanoyl-[acyl-carrier-protein] dehydratase (171 aa).

Histidine 69 is a catalytic residue.

The protein belongs to the thioester dehydratase family. FabA subfamily. Homodimer.

It is found in the cytoplasm. The catalysed reaction is a (3R)-hydroxyacyl-[ACP] = a (2E)-enoyl-[ACP] + H2O. It carries out the reaction (3R)-hydroxydecanoyl-[ACP] = (2E)-decenoyl-[ACP] + H2O. The enzyme catalyses (2E)-decenoyl-[ACP] = (3Z)-decenoyl-[ACP]. Its pathway is lipid metabolism; fatty acid biosynthesis. Functionally, necessary for the introduction of cis unsaturation into fatty acids. Catalyzes the dehydration of (3R)-3-hydroxydecanoyl-ACP to E-(2)-decenoyl-ACP and then its isomerization to Z-(3)-decenoyl-ACP. Can catalyze the dehydratase reaction for beta-hydroxyacyl-ACPs with saturated chain lengths up to 16:0, being most active on intermediate chain length. This Caulobacter sp. (strain K31) protein is 3-hydroxydecanoyl-[acyl-carrier-protein] dehydratase.